Reading from the N-terminus, the 349-residue chain is Cyclic AMP-dependent transcription factor ATF-4 (349 aa).

3 disordered regions span residues 49–75, 204–271, and 279–298; these read FSSD…TGKE, PPCV…TAKV, and KLKK…QKKR. Residue Pro-60 is modified to 4-hydroxyproline. Thr-212 is subject to Phosphothreonine. A phosphoserine mark is found at Ser-214, Ser-218, Ser-223, Ser-230, and Ser-234. The BetaTrCP degron motif signature appears at 214-223; sequence SDNDSGICMS. Over residues 229-239 the composition is skewed to polar residues; the sequence is GSPQHSPSTSR. Pro-235 carries the post-translational modification 4-hydroxyproline. Residue Ser-247 is modified to Phosphoserine. Residue Ser-251 is modified to Phosphoserine; by RPS6KA3. Glycyl lysine isopeptide (Lys-Gly) (interchain with G-Cter in SUMO2) cross-links involve residues Lys-258 and Lys-270. The 64-residue stretch at 276–339 folds into the bZIP domain; the sequence is LDKKLKKMEQ…QYLKDLIEEV (64 aa). A basic motif region spans residues 278–298; the sequence is KKLKKMEQNKTAATRYRQKKR. The tract at residues 303–339 is interaction with GABBR1; sequence ALTGECKELEKKNEALKEKADSLAKEIQYLKDLIEEV. Residues 304 to 332 form a leucine-zipper region; the sequence is LTGECKELEKKNEALKEKADSLAKEIQYL. Lys-309 carries the N6-acetyllysine modification.

It belongs to the bZIP family. Binds DNA as a homodimer and as a heterodimer. Heterodimer; heterodimerizes with CEBPB. Heterodimer; heterodimerizes with DDIT3/CHOP. Interacts with CEP290 (via an N-terminal region). Interacts with NEK6, DAPK2 (isoform 2) and ZIPK/DAPK3. Interacts (via its leucine zipper domain) with GABBR1 and GABBR2 (via their C-termini). Forms a heterodimer with TXLNG in osteoblasts. Interacts (via its DNA binding domain) with FOXO1 (C-terminal half); the interaction occurs in osteoblasts and regulates glucose homeostasis through suppression of beta-cell proliferation and a decrease in insulin production. Interacts with SATB2; the interaction results in enhanced DNA binding and transactivation by these transcription factors. Interacts with ABRAXAS2. Interacts with TRIB3, inhibiting the transactivation activity of ATF4. Interacts with DISC1; which inhibits ATF4 transcription factor activity by disrupting ATF4 dimerization and DNA-binding. Interacts with EP300/p300; EP300/p300 stabilizes ATF4 and increases its transcriptional activity independently of its catalytic activity by preventing its ubiquitination. Ubiquitinated by SCF(BTRC) in response to mTORC1 signal, followed by proteasomal degradation and leading to down-regulate expression of SIRT4. Interaction with EP300/p300 inhibits ubiquitination by SCF(BTRC). Post-translationally, phosphorylation at Ser-251 by RPS6KA3/RSK2 in osteoblasts enhances transactivation activity and promotes osteoblast differentiation. Phosphorylated on the betaTrCP degron motif at Ser-218, followed by phosphorylation at Thr-212, Ser-223, Ser-230, Ser-234 and Ser-247, promoting interaction with BTRC and ubiquitination. Phosphorylation is promoted by mTORC1. Phosphorylation at Ser-214 by CK2 decreases its stability. Phosphorylated by NEK6. In terms of processing, hydroxylated by PHD3, leading to decreased protein stability. As to expression, ubiquitously expressed in adults.

It localises to the nucleus. The protein localises to the nucleus speckle. Its subcellular location is the cytoplasm. The protein resides in the cell membrane. It is found in the cytoskeleton. It localises to the microtubule organizing center. The protein localises to the centrosome. Transcription factor that binds the cAMP response element (CRE) (consensus: 5'-GTGACGT[AC][AG]-3') and displays two biological functions, as regulator of metabolic and redox processes under normal cellular conditions, and as master transcription factor during integrated stress response (ISR). Binds to asymmetric CRE's as a heterodimer and to palindromic CRE's as a homodimer. Core effector of the ISR, which is required for adaptation to various stress such as endoplasmic reticulum (ER) stress, amino acid starvation, mitochondrial stress or oxidative stress. During ISR, ATF4 translation is induced via an alternative ribosome translation re-initiation mechanism in response to EIF2S1/eIF-2-alpha phosphorylation, and stress-induced ATF4 acts as a master transcription factor of stress-responsive genes in order to promote cell recovery. Promotes the transcription of genes linked to amino acid sufficiency and resistance to oxidative stress to protect cells against metabolic consequences of ER oxidation. Activates the transcription of NLRP1, possibly in concert with other factors in response to ER stress. Activates the transcription of asparagine synthetase (ASNS) in response to amino acid deprivation or ER stress. However, when associated with DDIT3/CHOP, the transcriptional activation of the ASNS gene is inhibited in response to amino acid deprivation. Together with DDIT3/CHOP, mediates programmed cell death by promoting the expression of genes involved in cellular amino acid metabolic processes, mRNA translation and the terminal unfolded protein response (terminal UPR), a cellular response that elicits programmed cell death when ER stress is prolonged and unresolved. Activates the expression of COX7A2L/SCAF1 downstream of the EIF2AK3/PERK-mediated unfolded protein response, thereby promoting formation of respiratory chain supercomplexes and increasing mitochondrial oxidative phosphorylation. Together with DDIT3/CHOP, activates the transcription of the IRS-regulator TRIB3 and promotes ER stress-induced neuronal cell death by regulating the expression of BBC3/PUMA in response to ER stress. May cooperate with the UPR transcriptional regulator QRICH1 to regulate ER protein homeostasis which is critical for cell viability in response to ER stress. In the absence of stress, ATF4 translation is at low levels and it is required for normal metabolic processes such as embryonic lens formation, fetal liver hematopoiesis, bone development and synaptic plasticity. Acts as a regulator of osteoblast differentiation in response to phosphorylation by RPS6KA3/RSK2: phosphorylation in osteoblasts enhances transactivation activity and promotes expression of osteoblast-specific genes and post-transcriptionally regulates the synthesis of Type I collagen, the main constituent of the bone matrix. Cooperates with FOXO1 in osteoblasts to regulate glucose homeostasis through suppression of beta-cell production and decrease in insulin production. Activates transcription of SIRT4. Regulates the circadian expression of the core clock component PER2 and the serotonin transporter SLC6A4. Binds in a circadian time-dependent manner to the cAMP response elements (CRE) in the SLC6A4 and PER2 promoters and periodically activates the transcription of these genes. Mainly acts as a transcriptional activator in cellular stress adaptation, but it can also act as a transcriptional repressor: acts as a regulator of synaptic plasticity by repressing transcription, thereby inhibiting induction and maintenance of long-term memory. Regulates synaptic functions via interaction with DISC1 in neurons, which inhibits ATF4 transcription factor activity by disrupting ATF4 dimerization and DNA-binding. The chain is Cyclic AMP-dependent transcription factor ATF-4 from Mus musculus (Mouse).